We begin with the raw amino-acid sequence, 132 residues long: UPF0102 protein LI0223 (132 aa).

The protein belongs to the UPF0102 family.

This Lawsonia intracellularis (strain PHE/MN1-00) protein is UPF0102 protein LI0223.